Here is a 395-residue protein sequence, read N- to C-terminus: GPI-anchor transamidase (395 aa).

The signal sequence occupies residues 1-27 (MVDTCFLSRGLTTLAGLLLLPFGSLAA). Residues 28 to 368 (SQIEDQAEQF…PKLKDWHPPG (341 aa)) lie on the Lumenal side of the membrane. The Ca(2+) site is built by D79, I82, E118, and D120. H164 serves as the catalytic Proton donor. Residue C206 is the Nucleophile; acyl-thioester intermediate of the active site. A protein is bound by residues C206, S232, and S234. The autoinhibitory loop stretch occupies residues 231-236 (DSLSHQ). Residues C275 and C280 are joined by a disulfide bond. Residues 369 to 385 (GFILGLWALIIMVFFKT) traverse the membrane as a helical segment. The Cytoplasmic segment spans residues 386 to 395 (YGIKHMKFIF).

The protein belongs to the peptidase C13 family. Heteropentamer. Part of the GPI-anchor transamidase complex, consisting of PIGK, PIGT, PIGS, PIGU and GAA1. Interacts with GPAA1. Interacts with PIGT; this interaction, via a disulfide link, stabilizes the expression of GAA1 and PIGK and links them to PIGS. The disulfide bond between PIGK/GPI8 and PIGT is important for normal enzyme activity.

It localises to the endoplasmic reticulum membrane. It participates in glycolipid biosynthesis; glycosylphosphatidylinositol-anchor biosynthesis. Its activity is regulated as follows. In the absence of proproteins substrates, exists in an inactive state with a disrupted catalytic site by an autoinhibitory loop. The binding of proprotein substrates, particularly the CSP region, to GPI-T triggers concerted conformational changes that alleviate the inhibition by the autoinhibitory loop. Meanwhile, proprotein residues near the omega- site induce the formation of a catalytic cleft for catalysis, following which the products are released and GPI-T reverts to the inactive state. Functionally, catalytic subunit of the glycosylphosphatidylinositol-anchor (GPI-anchor) transamidase (GPI-T) complex that catalyzes the formation of the linkage between a proprotein and a GPI-anchor and participates in GPI anchored protein biosynthesis. Recognizes diverse proproteins at a C-terminal signal peptide (CSP) region that lacks consensus sequence and replaces it with a GPI-anchor via a transamidation reaction. Transamidation catalysis reaction follows a two-phase mechanism. In the acyl-enzyme phase, the carbonyl group of the proproteins's omega-site undergoes a nucleophilic attack forming an enzyme-substrate thioester bond. Followed by a general acid catalysis that allows CSP releasing, regenerating the carbonyl, and forming the acyl-enzyme intermediate. In the GPI-anchor attachment phase, the amino group of the GPI-anchor's ethanolamine phosphate, the one on third mannose (EtNP3), mediates a nucleophilic attack on the carbonyl of the acyl-enzyme intermediate, replacing the CSP, allowing GPI-anchor attachment to the omega-residue, therefore forming the product and freeing the enzyme. The protein is GPI-anchor transamidase of Bos taurus (Bovine).